We begin with the raw amino-acid sequence, 1479 residues long: MTKRAGLPLGRAFLVLILLSAADSLFFSSFPRSALQLFSSVLFTDAAEPDSDATPGLRPQPSPRTFRPTGYQRIEVKTVDEELPEDLKVYTASTRGSSSRTFEVRNAGGRQEGFTLSVLTAGGPLPHGSWSWSGTPPEVQTTGGSQISFGWVPDTETPSLPERNLLQLKRMLRDEGLIEAVQLRAAEKGCPVAVLHNLRQLPVNFREVLHEEYESRSNPAKMYEVANSYVQQRGSDAARWSVSQSVELSLLEMHATSTTDPRGSSAVPSFLETGPQVRVAMTDAVPSGIRVYATPPAPRPVPVQSNQTEKERSPTSKRLVGMQLGLYLICKLAALFGHPTLFLNPYYTEQQLLEAVAQALGIAPPHRGDFENEGNEAQATANQHNGSADQLLAAIEIFRLGPNPYTIGHVLTLMIAYLDYESFFGASPSKPFHSWVSLAASAGNNTGFAMLDEMCDNHRGPKRRGQKHWYQTGGARKHKNRDMLPLHRQLCDALELVLNGVQQIQIDLMDELGKYKTGVEPLVDPATNSARIHTRTCRGLSPVCDYEATILAPVRALEPHEQQDSLRTKKAFNLVTGYGSGHVGQITGSIAEPFSHSWRTRWGKVVADPTAYGEIFERTLWFDDRELMAKSSGALFRQYDRIAKDSMSFGVFMNVENGLLKKDMRSKLEAYISQRKSFVEKRQQSRFAKLRKKIPENDPYALRAAIFLALNSRTFCAQPTSFLSSFRTFLTNQYHKLSQGRNLPRSQRSLMAFMRTGQVKFFQEWCSFDPLAVNALFLFRFAVSGTDPAALHDRQHTRVSRNKKTMRILNSKWTPAVLKKLMRKVNHKHMAREAKALLLRSLDPTVLSSIVTAFDFITHTQANLEVNQNAFMYHEVRAREVSRQSAAEKGSHRLHERGLVRETDDMIKRWAEHGIPGDIKRRLARGEKLPEGMSFGGIPIPNLTNWDAQLNSKWLEAYNAYLRHPYGRAALNARDPVALLVKDSRDRLQAEAEGTIFLGRIAKRVHQSKNLLRRAGRALKTFFLSLLRENERSEYAVWFGVKVDMRQVIQTCRQINSVAEVVKNDRLYDFITDGWMELVKDVVAGYTKASVRVPGFDTISAANEQLRKEGVAAATARNQGFLSIHYDYANLPEEERKKEFQRSMCMEQCEALWKLVMAFVMPNLQNPKKLKGYEKDFSGAKEIEKLNSPHHVNAFRFSLSVQIDFFDNMLDKTSKKNLKAMKFGASTWFTYAMKLAGQVNSEMGNPNLGTALYMQAAYYGNYIRKWMEQRRKSRKQAIIGVLTLGMMGLYALLNVADIVQHMEDIGGAPPVSCVTNEILGVTCAPQAIAKATTSAARVATQDFLKVGLFAGMAPYLMLPMAVVSVWNILKSEIKVLLQFEMALKHTFTRLKRWLAAPFKNWWAKRGRLKDALFRRASQTYRKTEQETKQPPRPRNLHNPSSWGDTELDSLGVPPEPFVQDFEIKYTTPVFPMSAPLIKA.

The signal sequence occupies residues 1–24; it reads MTKRAGLPLGRAFLVLILLSAADS. At 25–1277 the chain is on the cytoplasmic side; that stretch reads LFFSSFPRSA…EQRRKSRKQA (1253 aa). Disordered regions lie at residues 49-68 and 291-316; these read PDSD…TFRP and VYAT…SPTS. A helical membrane pass occupies residues 1278–1298; the sequence is IIGVLTLGMMGLYALLNVADI. An interaction with AMA1 region spans residues 1297–1333; it reads DIVQHMEDIGGAPPVSCVTNEILGVTCAPQAIAKATT. The Extracellular portion of the chain corresponds to 1299–1479; that stretch reads VQHMEDIGGA…FPMSAPLIKA (181 aa). Cys1313 and Cys1323 are disulfide-bonded. The disordered stretch occupies residues 1419-1445; the sequence is TYRKTEQETKQPPRPRNLHNPSSWGDT.

It belongs to the apicomplexan parasites RON2 family. As to quaternary structure, component of the moving junction (MJ) complex, composed of AMA1, a transmembrane protein on the parasite surface, and a complex of the rhoptry neck proteins RON2, RON4, RON5 and RON8 localized to the cytoplasmic face of the host plasma membrane. Interacts (via C-terminus) with AMA1 (via ectodomain); RON2 serves as the receptor for AMA1 on the host plasma membrane. AMA1 and the RON proteins are initially in distinct compartments within the parasite, namely the micronemes and the rhoptries, and interaction happens only upon initiation of invasion when the micronemes and rhoptries discharge.

It localises to the secreted. It is found in the cytoplasm. The protein resides in the host cell membrane. Essential rhoptry neck protein that plays an important role in host cell invasion. Upon host invasion by tachyzoites, the protein is injected into the host cell where it functions as a receptor for apical membrane antigen 1 (AMA1) on the parasite. Part of the moving junction (MJ) complex, a ringlike structure formed between the plasma membranes of the apical tip of the parasite and the target host cell. During invasion, the MJ migrates from the anterior to the posterior of the parasite, leading to internalization of the parasite into a parasitophorous vacuole (PV). In Toxoplasma gondii (strain ATCC 50611 / Me49), this protein is Rhoptry neck protein 2 (RON2).